A 107-amino-acid chain; its full sequence is MAFVVTDNCIKCKYTDCVEVCPVDCFYEGPNFLVIHPDECIDCALCEPECPAQAIFSEDEVPEDMQEFIQLNAELAEVWPNITEKKDPLPDAEDWDGVKGKLQHLER.

4Fe-4S ferredoxin-type domains are found at residues 2–30 (AFVVTDNCIKCKYTDCVEVCPVDCFYEGP) and 31–60 (NFLVIHPDECIDCALCEPECPAQAIFSEDE). Residues Cys-9 and Cys-17 each coordinate [3Fe-4S] cluster. Residues Cys-21, Cys-40, Cys-43, and Cys-46 each contribute to the [4Fe-4S] cluster site. Cys-50 is a [3Fe-4S] cluster binding site. The tract at residues 84–107 (EKKDPLPDAEDWDGVKGKLQHLER) is disordered. Over residues 96-107 (DGVKGKLQHLER) the composition is skewed to basic and acidic residues.

[4Fe-4S] cluster is required as a cofactor. [3Fe-4S] cluster serves as cofactor.

Functionally, ferredoxins are iron-sulfur proteins that transfer electrons in a wide variety of metabolic reactions. This ferredoxin could play a role in regulating gene expression by interacting directly with DNA. This is Ferredoxin-1 (fdxA) from Azotobacter vinelandii.